Reading from the N-terminus, the 325-residue chain is GMP reductase (325 aa).

C174 serves as the catalytic Thioimidate intermediate. Position 203 to 226 (203 to 226 (LIADGGIRTHGDIAKSIRFGASMV)) interacts with NADP(+).

It belongs to the IMPDH/GMPR family. GuaC type 2 subfamily.

The catalysed reaction is IMP + NH4(+) + NADP(+) = GMP + NADPH + 2 H(+). Catalyzes the irreversible NADPH-dependent deamination of GMP to IMP. It functions in the conversion of nucleobase, nucleoside and nucleotide derivatives of G to A nucleotides, and in maintaining the intracellular balance of A and G nucleotides. The sequence is that of GMP reductase from Staphylococcus aureus (strain JH9).